Consider the following 2027-residue polypeptide: Citron Rho-interacting kinase (2027 aa).

M1 carries the N-acetylmethionine modification. One can recognise a Protein kinase domain in the interval 97 to 360 (FEVRSLVGCG…FEGLCCHPFF (264 aa)). Residues 103-111 (VGCGHFAEV) and K126 each bind ATP. The Proton acceptor role is filled by D221. The 71-residue stretch at 361–431 (SKIDWNNIRN…SKALGILGRS (71 aa)) folds into the AGC-kinase C-terminal domain. Phosphoserine is present on residues S433, S440, S480, and S582. Positions 453–1297 (IKSKELQDSQ…SAREEAAHRK (845 aa)) form a coiled coil. The interval 1091-1302 (LAVKEHKAEI…AAHRKATDHP (212 aa)) is interaction with Rho/Rac. At Y1196 the chain carries Phosphotyrosine. The span at 1290–1303 (REEAAHRKATDHPH) shows a compositional bias: basic and acidic residues. Disordered regions lie at residues 1290–1310 (REEA…PATA) and 1322–1351 (SPEH…EFSR). Positions 1327 to 1337 (PSAMSLLAPPS) are enriched in low complexity. The segment covering 1339-1351 (RRKESSTPEEFSR) has biased composition (basic and acidic residues). Residues 1362-1411 (PHRFNVGLNMRATKCAVCLDTVHFGRQASKCLECQVMCHPKCSTCLPATC) form a Phorbol-ester/DAG-type zinc finger. A PH domain is found at 1443–1563 (SLHLEGWMKV…WVTALESVVA (121 aa)). Positions 1591 to 1881 (RLDMNCTLPF…RYLGPAISSG (291 aa)) constitute a CNH domain. The residue at position 1721 (K1721) is an N6-acetyllysine. The interval 1905–2012 (ESGTEHHRGP…RGRLPAGAVR (108 aa)) is disordered. S1940 carries the post-translational modification Phosphoserine. Residues 1948 to 2003 (SHPREPSTPHRYREGRTELRRDKSPGRPLEREKSPGRMLSTRRERSPGRLFEDSSR) are compositionally biased toward basic and acidic residues. An SH3-binding motif is present at residues 1953–1958 (PSTPHR). A Phosphoserine modification is found at S1993. Phosphothreonine is present on T2013.

This sequence belongs to the protein kinase superfamily. AGC Ser/Thr protein kinase family. Directly interacts with KIF14 depending on the activation state (stronger interaction with the kinase-dead form). Homodimer. Interacts with TTC3.

It localises to the cytoplasm. The enzyme catalyses L-seryl-[protein] + ATP = O-phospho-L-seryl-[protein] + ADP + H(+). The catalysed reaction is L-threonyl-[protein] + ATP = O-phospho-L-threonyl-[protein] + ADP + H(+). Functionally, plays a role in cytokinesis. Required for KIF14 localization to the central spindle and midbody. Putative RHO/RAC effector that binds to the GTP-bound forms of RHO and RAC1. It probably binds p21 with a tighter specificity in vivo. Displays serine/threonine protein kinase activity. Plays an important role in the regulation of cytokinesis and the development of the central nervous system. Phosphorylates MYL9/MLC2. This Homo sapiens (Human) protein is Citron Rho-interacting kinase (CIT).